A 516-amino-acid chain; its full sequence is Calcium and calcium/calmodulin-dependent serine/threonine-protein kinase (516 aa).

The Protein kinase domain maps to Tyr13–Val298. ATP-binding positions include Leu19–Val27 and Lys43. The Proton acceptor role is filled by Asp163. Thr263 is subject to Phosphothreonine. Positions Ala321 to Leu334 are calmodulin-binding. A coiled-coil region spans residues Lys343–Arg363. 3 consecutive EF-hand domains span residues Ser392–Ser427, Arg428–Glu463, and Thr470–Leu505. The Ca(2+) site is built by Asp405, Asn407, Asp409, Thr411, Glu416, Asp441, Asp443, Ser445, Cys447, Glu452, Asp483, Asp485, Asp487, Lys489, and Glu494.

Belongs to the protein kinase superfamily. CAMK Ser/Thr protein kinase family. CaMK subfamily. In terms of processing, autophosphorylation. As to expression, mainly expressed in roots and panicles. Detected in leaves, shoots and culms.

It localises to the nucleus. The protein localises to the cytoplasm. Its subcellular location is the cell membrane. It catalyses the reaction L-seryl-[protein] + ATP = O-phospho-L-seryl-[protein] + ADP + H(+). The enzyme catalyses L-threonyl-[protein] + ATP = O-phospho-L-threonyl-[protein] + ADP + H(+). Calcium- and calmodulin-dependent protein kinase required for arbuscular mycorrhizal (AM) symbiosis. Involved in response to water deprivation stress. Required for abscisic acid-induced antioxidant defense and oxidative stress tolerance during dehydration stress. Functions upstream of MPK1 in an abscisic acid signaling pathway that regulates the activities of antioxidant enzymes and the production of hydrogen peroxide. The sequence is that of Calcium and calcium/calmodulin-dependent serine/threonine-protein kinase (CCAMK) from Oryza sativa subsp. japonica (Rice).